The following is a 216-amino-acid chain: 3-isopropylmalate dehydratase small subunit (216 aa).

Belongs to the LeuD family. LeuD type 1 subfamily. In terms of assembly, heterodimer of LeuC and LeuD.

It catalyses the reaction (2R,3S)-3-isopropylmalate = (2S)-2-isopropylmalate. Its pathway is amino-acid biosynthesis; L-leucine biosynthesis; L-leucine from 3-methyl-2-oxobutanoate: step 2/4. Catalyzes the isomerization between 2-isopropylmalate and 3-isopropylmalate, via the formation of 2-isopropylmaleate. The sequence is that of 3-isopropylmalate dehydratase small subunit from Methylibium petroleiphilum (strain ATCC BAA-1232 / LMG 22953 / PM1).